The following is a 121-amino-acid chain: Large ribosomal subunit protein uL24 (121 aa).

This sequence belongs to the universal ribosomal protein uL24 family. In terms of assembly, part of the 50S ribosomal subunit.

Its function is as follows. One of two assembly initiator proteins, it binds directly to the 5'-end of the 23S rRNA, where it nucleates assembly of the 50S subunit. Functionally, located at the polypeptide exit tunnel on the outside of the subunit. The sequence is that of Large ribosomal subunit protein uL24 from Thermococcus kodakarensis (strain ATCC BAA-918 / JCM 12380 / KOD1) (Pyrococcus kodakaraensis (strain KOD1)).